A 678-amino-acid polypeptide reads, in one-letter code: Glycine--tRNA ligase beta subunit (678 aa).

The protein belongs to the class-II aminoacyl-tRNA synthetase family. In terms of assembly, tetramer of two alpha and two beta subunits.

It localises to the cytoplasm. It carries out the reaction tRNA(Gly) + glycine + ATP = glycyl-tRNA(Gly) + AMP + diphosphate. This chain is Glycine--tRNA ligase beta subunit, found in Streptococcus pneumoniae (strain ATCC 700669 / Spain 23F-1).